A 59-amino-acid chain; its full sequence is Large ribosomal subunit protein uL30 (59 aa).

The protein belongs to the universal ribosomal protein uL30 family. Part of the 50S ribosomal subunit.

This Rhodococcus jostii (strain RHA1) protein is Large ribosomal subunit protein uL30.